A 441-amino-acid polypeptide reads, in one-letter code: Eukaryotic translation initiation factor 3 subunit E (441 aa).

The region spanning 223–407 (IFFNHDNGRT…GTVIMEPTQP (185 aa)) is the PCI domain.

It belongs to the eIF-3 subunit E family. Component of the eukaryotic translation initiation factor 3 (eIF-3) complex (Potential). Binds to the translation initiation factors TIF3F1 and TIF3H1. Associates with the CSN (COP9 signalosome) complex. Interacts directly with CSN1, CSN4, CSN6A, CSN6B, CSN7, CSN8 and TIF3C1. Binds to 40S small ribosomal subunit S9 (RPS9B and RPS9C) via its N-terminal part. Interacts with the 26S proteasome subunit RPN12a via its C-terminal part. Also binds with At1g27930 and At4g30620.

It localises to the cytoplasm. It is found in the nucleus. Component of the eukaryotic translation initiation factor 3 (eIF-3) complex, which is involved in protein synthesis of a specialized repertoire of mRNAs and, together with other initiation factors, stimulates binding of mRNA and methionyl-tRNAi to the 40S ribosome. The eIF-3 complex specifically targets and initiates translation of a subset of mRNAs involved in cell proliferation (Potential). Negatively regulates translation during flower development. In Arabidopsis thaliana (Mouse-ear cress), this protein is Eukaryotic translation initiation factor 3 subunit E.